The chain runs to 33 residues: NAD-reducing hydrogenase HoxS subunit gamma (33 aa).

The region spanning 1-33 (SIEIEIDGVTVTTEESRTLVDVAAEAGVYIPTL) is the 2Fe-2S ferredoxin-type domain.

Belongs to the complex I 75 kDa subunit family. As to quaternary structure, tetramer of an alpha and a gamma subunits (flavin-containing dimer), and a delta and a nickel-containing beta subunits (hydrogenase dimer). The cofactor is [4Fe-4S] cluster.

It is found in the cytoplasm. The catalysed reaction is H2 + NAD(+) = NADH + H(+). Functionally, subunits alpha and gamma of HoxS constitute an NADH--oxidoreductase. In Rhodococcus opacus (Nocardia opaca), this protein is NAD-reducing hydrogenase HoxS subunit gamma (hoxU).